Here is a 447-residue protein sequence, read N- to C-terminus: Phosphoglucosamine mutase (447 aa).

Ser88 acts as the Phosphoserine intermediate in catalysis. Residues Ser88, Asp231, Asp233, and Asp235 each contribute to the Mg(2+) site. Ser88 is subject to Phosphoserine.

It belongs to the phosphohexose mutase family. The cofactor is Mg(2+). Activated by phosphorylation.

It carries out the reaction alpha-D-glucosamine 1-phosphate = D-glucosamine 6-phosphate. Catalyzes the conversion of glucosamine-6-phosphate to glucosamine-1-phosphate. The polypeptide is Phosphoglucosamine mutase (Methanococcus maripaludis (strain C7 / ATCC BAA-1331)).